A 183-amino-acid polypeptide reads, in one-letter code: ATP synthase subunit delta (183 aa).

It belongs to the ATPase delta chain family. F-type ATPases have 2 components, F(1) - the catalytic core - and F(0) - the membrane proton channel. F(1) has five subunits: alpha(3), beta(3), gamma(1), delta(1), epsilon(1). F(0) has three main subunits: a(1), b(2) and c(10-14). The alpha and beta chains form an alternating ring which encloses part of the gamma chain. F(1) is attached to F(0) by a central stalk formed by the gamma and epsilon chains, while a peripheral stalk is formed by the delta and b chains.

The protein localises to the cell inner membrane. Functionally, f(1)F(0) ATP synthase produces ATP from ADP in the presence of a proton or sodium gradient. F-type ATPases consist of two structural domains, F(1) containing the extramembraneous catalytic core and F(0) containing the membrane proton channel, linked together by a central stalk and a peripheral stalk. During catalysis, ATP synthesis in the catalytic domain of F(1) is coupled via a rotary mechanism of the central stalk subunits to proton translocation. Its function is as follows. This protein is part of the stalk that links CF(0) to CF(1). It either transmits conformational changes from CF(0) to CF(1) or is implicated in proton conduction. The protein is ATP synthase subunit delta of Rickettsia typhi (strain ATCC VR-144 / Wilmington).